A 434-amino-acid chain; its full sequence is ATP-dependent protease ATPase subunit HslU (434 aa).

ATP contacts are provided by residues Ile-18, 60–65 (GVGKTE), Asp-247, Glu-312, and Arg-384.

It belongs to the ClpX chaperone family. HslU subfamily. A double ring-shaped homohexamer of HslV is capped on each side by a ring-shaped HslU homohexamer. The assembly of the HslU/HslV complex is dependent on binding of ATP.

It localises to the cytoplasm. Its function is as follows. ATPase subunit of a proteasome-like degradation complex; this subunit has chaperone activity. The binding of ATP and its subsequent hydrolysis by HslU are essential for unfolding of protein substrates subsequently hydrolyzed by HslV. HslU recognizes the N-terminal part of its protein substrates and unfolds these before they are guided to HslV for hydrolysis. This Brucella ovis (strain ATCC 25840 / 63/290 / NCTC 10512) protein is ATP-dependent protease ATPase subunit HslU.